The primary structure comprises 520 residues: Beta-galactoside-specific lectin 4 (520 aa).

A glycan (N-linked (GlcNAc...) asparagine) is linked at asparagine 107. The active site involves glutamate 159. Residues cysteine 240 and cysteine 266 are joined by a disulfide bond. Residues 241 to 265 (GERPSSSDVRYWPLVIRPVIADDVT) constitute a propeptide, connecting peptide. The Ricin B-type lectin 1 domain occupies 269–396 (SEPTVRIVGR…YTLGQGWLAG (128 aa)). Residue 284–286 (DVR) participates in D-galactose binding. N-linked (GlcNAc...) asparagine glycosylation occurs at asparagine 322. The cysteines at positions 325 and 342 are disulfide-linked. N-linked (GlcNAc...) asparagine glycosylation is found at asparagine 357 and asparagine 397. The Ricin B-type lectin 2 domain occupies 400-520 (APREVTIYGF…KPNQMWLPVP (121 aa)). 2 disulfide bridges follow: cysteine 413–cysteine 426 and cysteine 451–cysteine 467. 494–496 (DVA) lines the D-galactose pocket.

The protein belongs to the ribosome-inactivating protein family. Type 2 RIP subfamily. Disulfide-linked dimer of A and B chains.

It catalyses the reaction Endohydrolysis of the N-glycosidic bond at one specific adenosine on the 28S rRNA.. Its function is as follows. The A chain is responsible for inhibiting protein synthesis through the catalytic inactivation of 60S ribosomal subunits by removing adenine from position 4,324 of 28S rRNA. The B chain binds to cell receptors and probably facilitates the entry into the cell of the A chain; B chains are also responsible for cell agglutination (lectin activity). Inhibits growth of the human tumor cell line Molt4. This is Beta-galactoside-specific lectin 4 from Viscum album (European mistletoe).